Here is a 380-residue protein sequence, read N- to C-terminus: Cytochrome b (380 aa).

The next 4 membrane-spanning stretches (helical) occupy residues 33 to 53 (FGSLLGLCLATQILTGLFLAM), 77 to 98 (WLIRNIHANGASFFFICIYMHI), 113 to 133 (WNIGVVLLLLTMMTAFVGYVL), and 178 to 198 (FFAFHFLFPFVIAAATVLHLL). H83 and H97 together coordinate heme b. H182 and H196 together coordinate heme b. H201 contributes to the a ubiquinone binding site. 4 consecutive transmembrane segments (helical) span residues 226–246 (YKDLLGFVAMLLGLTSLALFA), 288–308 (LGGVLALLFSILVLMVVPILH), 320–340 (LTQFLFWTLVADMLILTWIGG), and 347–367 (FIIIGQIASVIYFTIFLVLAP).

It belongs to the cytochrome b family. The cytochrome bc1 complex contains 3 respiratory subunits (MT-CYB, CYC1 and UQCRFS1), 2 core proteins (UQCRC1 and UQCRC2) and probably 6 low-molecular weight proteins. Heme b serves as cofactor.

The protein resides in the mitochondrion inner membrane. Component of the ubiquinol-cytochrome c reductase complex (complex III or cytochrome b-c1 complex) that is part of the mitochondrial respiratory chain. The b-c1 complex mediates electron transfer from ubiquinol to cytochrome c. Contributes to the generation of a proton gradient across the mitochondrial membrane that is then used for ATP synthesis. In Salmo salar (Atlantic salmon), this protein is Cytochrome b (mt-cyb).